A 203-amino-acid chain; its full sequence is Endo-type membrane-bound lytic murein transglycosylase A (203 aa).

The signal sequence occupies residues 1 to 15 (MKLRWFAFLVVILAG). Residue Cys16 is the site of N-palmitoyl cysteine attachment. The S-diacylglycerol cysteine moiety is linked to residue Cys16.

The protein belongs to the transglycosylase Slt family.

It localises to the cell outer membrane. The catalysed reaction is Endolytic cleavage of the (1-&gt;4)-beta-glycosidic linkage between N-acetylmuramic acid (MurNAc) and N-acetylglucosamine (GlcNAc) residues in peptidoglycan with concomitant formation of a 1,6-anhydrobond in the MurNAc residue.. Its function is as follows. Murein-degrading enzyme. May play a role in recycling of muropeptides during cell elongation and/or cell division. Preferentially cleaves at a distance of more than two disaccharide units from the ends of the glycan chain. In Salmonella paratyphi C (strain RKS4594), this protein is Endo-type membrane-bound lytic murein transglycosylase A.